A 355-amino-acid polypeptide reads, in one-letter code: UDP-N-acetylglucosamine--N-acetylmuramyl-(pentapeptide) pyrophosphoryl-undecaprenol N-acetylglucosamine transferase (355 aa).

UDP-N-acetyl-alpha-D-glucosamine-binding positions include 12–14, Asn-124, Arg-160, Ser-192, Ile-243, 262–267, and Gln-287; these read TGG and ALTVCE.

This sequence belongs to the glycosyltransferase 28 family. MurG subfamily.

It is found in the cell inner membrane. It catalyses the reaction di-trans,octa-cis-undecaprenyl diphospho-N-acetyl-alpha-D-muramoyl-L-alanyl-D-glutamyl-meso-2,6-diaminopimeloyl-D-alanyl-D-alanine + UDP-N-acetyl-alpha-D-glucosamine = di-trans,octa-cis-undecaprenyl diphospho-[N-acetyl-alpha-D-glucosaminyl-(1-&gt;4)]-N-acetyl-alpha-D-muramoyl-L-alanyl-D-glutamyl-meso-2,6-diaminopimeloyl-D-alanyl-D-alanine + UDP + H(+). It functions in the pathway cell wall biogenesis; peptidoglycan biosynthesis. In terms of biological role, cell wall formation. Catalyzes the transfer of a GlcNAc subunit on undecaprenyl-pyrophosphoryl-MurNAc-pentapeptide (lipid intermediate I) to form undecaprenyl-pyrophosphoryl-MurNAc-(pentapeptide)GlcNAc (lipid intermediate II). The chain is UDP-N-acetylglucosamine--N-acetylmuramyl-(pentapeptide) pyrophosphoryl-undecaprenol N-acetylglucosamine transferase from Haemophilus ducreyi (strain 35000HP / ATCC 700724).